Consider the following 359-residue polypeptide: Peptide chain release factor 1 (359 aa).

N5-methylglutamine is present on glutamine 236.

This sequence belongs to the prokaryotic/mitochondrial release factor family. In terms of processing, methylated by PrmC. Methylation increases the termination efficiency of RF1.

The protein resides in the cytoplasm. Peptide chain release factor 1 directs the termination of translation in response to the peptide chain termination codons UAG and UAA. In Streptococcus pneumoniae (strain Taiwan19F-14), this protein is Peptide chain release factor 1.